A 283-amino-acid chain; its full sequence is MTATIIDGKETAKEKREQLAKEVEELKQKGVTPGLAVILIGDDPASLSYVRGKKKAAEAMGMHFQLDHLDASLTEEELLQLIDQYNANDQFHGILVQLPLPKHISEKAVIERISPEKDVDGFHPLNIGKMLLGEDTFLPCTPAGIVELLNKTGVNLSGKEVVVVGRSNIVGKPVGQLLLNENATVTYCHSRTANISEHTLKADILVVAVGRANFIKADQIKEGAIVIDVGVNRLDTGKLVGDVDFEEAKEKASYITPVPGGVGPMTITMLAHNTVKSAKRTLA.

NADP(+)-binding positions include 165–167, S190, and V231; that span reads GRS.

This sequence belongs to the tetrahydrofolate dehydrogenase/cyclohydrolase family. In terms of assembly, homodimer.

The catalysed reaction is (6R)-5,10-methylene-5,6,7,8-tetrahydrofolate + NADP(+) = (6R)-5,10-methenyltetrahydrofolate + NADPH. It catalyses the reaction (6R)-5,10-methenyltetrahydrofolate + H2O = (6R)-10-formyltetrahydrofolate + H(+). The protein operates within one-carbon metabolism; tetrahydrofolate interconversion. In terms of biological role, catalyzes the oxidation of 5,10-methylenetetrahydrofolate to 5,10-methenyltetrahydrofolate and then the hydrolysis of 5,10-methenyltetrahydrofolate to 10-formyltetrahydrofolate. The chain is Bifunctional protein FolD from Bacillus pumilus (strain SAFR-032).